A 254-amino-acid polypeptide reads, in one-letter code: N-acetylglucosamine-induced protein 1 (254 aa).

The protein resides in the cytoplasm. In terms of biological role, N-acetylglucosamine-induced protein which plays a role in the N-acetylglucosamine metabolic pathway. This chain is N-acetylglucosamine-induced protein 1, found in Candida albicans (strain SC5314 / ATCC MYA-2876) (Yeast).